Reading from the N-terminus, the 341-residue chain is Tyrosine recombinase XerC (341 aa).

The 92-residue stretch at proline 14–aspartate 105 folds into the Core-binding (CB) domain. Residues proline 126–glutamate 309 form the Tyr recombinase domain. Active-site residues include arginine 169, lysine 193, histidine 261, arginine 264, and histidine 287. The O-(3'-phospho-DNA)-tyrosine intermediate role is filled by tyrosine 296.

This sequence belongs to the 'phage' integrase family. XerC subfamily. In terms of assembly, forms a cyclic heterotetrameric complex composed of two molecules of XerC and two molecules of XerD.

Its subcellular location is the cytoplasm. Its function is as follows. Site-specific tyrosine recombinase, which acts by catalyzing the cutting and rejoining of the recombining DNA molecules. The XerC-XerD complex is essential to convert dimers of the bacterial chromosome into monomers to permit their segregation at cell division. It also contributes to the segregational stability of plasmids. In Rhodospirillum centenum (strain ATCC 51521 / SW), this protein is Tyrosine recombinase XerC.